A 437-amino-acid polypeptide reads, in one-letter code: Neomycin resistance protein (437 aa).

2 disordered regions span residues G161–A285 and V305–D338. Over residues P203–S229 the composition is skewed to low complexity. Positions R324–D338 are enriched in basic residues.

The protein belongs to the Gram-positive plasmids replication protein type 1 family.

The chain is Neomycin resistance protein from Streptomyces cyanogenus.